A 62-amino-acid polypeptide reads, in one-letter code: Potassium channel toxin alpha-KTx Tx308 (62 aa).

An N-terminal signal peptide occupies residues 1-18; it reads MQKLFIVLLLFCILRLDA. Cystine bridges form between Cys-28-Cys-46, Cys-33-Cys-59, and Cys-37-Cys-61.

It belongs to the short scorpion toxin superfamily. Potassium channel inhibitor family. Alpha-KTx 23 subfamily. In terms of tissue distribution, expressed by the venom gland.

The protein localises to the secreted. May block potassium channels. The chain is Potassium channel toxin alpha-KTx Tx308 from Buthus israelis (Israeli scorpion).